The primary structure comprises 338 residues: Queuosine 5'-phosphate N-glycosylase/hydrolase (338 aa).

At Met1 the chain carries N-acetylmethionine. Queuine is bound by residues His51, Phe235, Asp237, Asp311, Tyr312, and Asp316. The active-site Nucleophile or transition state stabilizer is Asp237.

Belongs to the QNG1 protein family. In terms of tissue distribution, highly expressed in liver.

It carries out the reaction queuosine 5'-phosphate + H2O = queuine + D-ribose 5-phosphate. In terms of biological role, catalyzes the hydrolysis of queuosine 5'-phosphate, releasing the nucleobase queuine (q). Is required for salvage of queuine from exogenous queuosine (Q) that is imported and then converted to queuosine 5'-phosphate intracellularly. In Mus musculus (Mouse), this protein is Queuosine 5'-phosphate N-glycosylase/hydrolase.